The following is a 321-amino-acid chain: Fimbria adhesin protein (321 aa).

The signal sequence occupies residues 1–18 (MKKLTLFIGLMALGTTSA).

This sequence belongs to the fimbrial protein family.

The protein localises to the fimbrium. In Klebsiella pneumoniae, this protein is Fimbria adhesin protein (mrkD).